A 55-amino-acid chain; its full sequence is Large ribosomal subunit protein bL33 (55 aa).

It belongs to the bacterial ribosomal protein bL33 family.

The sequence is that of Large ribosomal subunit protein bL33 from Sinorhizobium medicae (strain WSM419) (Ensifer medicae).